The following is a 196-amino-acid chain: MIPVVIEQTSRGERSYDIYSRLLKDRIIMLTGPVEDNMANSVIAQLLFLDAQDSTKDIYLYVNTPGGSVSAGLAIVDTMNFIKSDVQTIVMGMAASMGTIIASSGAKGKRFMLPNAEYMIHQPMGGTGGGTQQTDMAIAAEHLLKTRKTLEQILADNSGKTVEQIHADAERDYWMSAEETLAYGFIDEIMANNNLS.

Catalysis depends on Ser96, which acts as the Nucleophile. His121 is a catalytic residue.

Belongs to the peptidase S14 family. As to quaternary structure, fourteen ClpP subunits assemble into 2 heptameric rings which stack back to back to give a disk-like structure with a central cavity, resembling the structure of eukaryotic proteasomes.

Its subcellular location is the cytoplasm. It catalyses the reaction Hydrolysis of proteins to small peptides in the presence of ATP and magnesium. alpha-casein is the usual test substrate. In the absence of ATP, only oligopeptides shorter than five residues are hydrolyzed (such as succinyl-Leu-Tyr-|-NHMec, and Leu-Tyr-Leu-|-Tyr-Trp, in which cleavage of the -Tyr-|-Leu- and -Tyr-|-Trp bonds also occurs).. Functionally, cleaves peptides in various proteins in a process that requires ATP hydrolysis. Has a chymotrypsin-like activity. Plays a major role in the degradation of misfolded proteins. The polypeptide is ATP-dependent Clp protease proteolytic subunit (Streptococcus gordonii (strain Challis / ATCC 35105 / BCRC 15272 / CH1 / DL1 / V288)).